A 536-amino-acid chain; its full sequence is uncharacterized protein (536 aa).

Disordered regions lie at residues 1–76 (MSFT…SPAS) and 204–237 (NWNSSSSFTSSTSSTPISSSYSSSGTLPSKSNKS). Composition is skewed to low complexity over residues 7–76 (TSSV…SPAS) and 204–234 (NWNSSSSFTSSTSSTPISSSYSSSGTLPSKS). Residues 247-267 (CSVAIPVGVVLILIGLGIFLW) traverse the membrane as a helical segment. 2 disordered regions span residues 287-354 (YGFN…LLGG) and 373-536 (DASD…LNLF). Residues 290 to 326 (NPNQPSNFRSPNRAPSTNNRYRGWNGSPTPAAGNNTN) show a composition bias toward polar residues. Over residues 327–350 (GRPVAPRPSAGAGGANPPAASQPG) the composition is skewed to low complexity. The chain crosses the membrane as a helical span at residues 351–371 (LLGGSSNSAGPIAAATAAGVG). Positions 403–424 (SASNEAEATMPPSNGSNFSEGL) are enriched in polar residues. Residues 430–454 (ESGPAVGAAGAAAEAAEHSGSGSDS) are compositionally biased toward low complexity. Over residues 480–509 (SYGSRAALSSRSQSNLLSPTSTGASNQPNY) the composition is skewed to polar residues. Residues 517–527 (SSSNVSIPRSS) show a composition bias toward low complexity.

It localises to the membrane. This is an uncharacterized protein from Schizosaccharomyces pombe (strain 972 / ATCC 24843) (Fission yeast).